We begin with the raw amino-acid sequence, 447 residues long: MAGYEVNFDGLVGLTHHYAGLSFGNEASTRHQNTLSNPRLAAKQGLLKMKALADLGYKQGVLPPQERPAMGVLRQLGFSGSDEQVLSEVVRKSPRLLSAVSSASSMWTANAATVSPAADSADGRVHFTVANLNNKFHRAIEADTTSAILKSIFNNHRHFVHHDALPSVELFGDEGAANHNRLGGEYDRPAIQVFVYGRQGFEGGAMPSRYPARQTLEASEAVARLHLLDPERAVFVQQNPAVIDQGVFHNDVIAVSNQNVLFHHQHAFVPDIRVMEDLRRKMGRIEQQLFTIEVPAAQVSVAQAVSSYLFNSQLLSKANGKMLLVIPQESQECPAVWEYLSELINSGGPIDEVRVFDLRESMHNGGGPACLRLRVALNDTELAAVNSRVMMTPALFVALNNWVDQHYRDRLQFKDLADPQLLQEGRQALDELTKILNLGSIYPFQHL.

Residues 19–28, asparagine 110, and 137–138 each bind substrate; these read AGLSFGNEAS and HR. The active site involves glutamate 174. Arginine 213 is a binding site for substrate. Residue histidine 249 is part of the active site. Positions 251 and 364 each coordinate substrate. The active-site Nucleophile is cysteine 370.

The protein belongs to the succinylarginine dihydrolase family. As to quaternary structure, homodimer.

The enzyme catalyses N(2)-succinyl-L-arginine + 2 H2O + 2 H(+) = N(2)-succinyl-L-ornithine + 2 NH4(+) + CO2. It participates in amino-acid degradation; L-arginine degradation via AST pathway; L-glutamate and succinate from L-arginine: step 2/5. Functionally, catalyzes the hydrolysis of N(2)-succinylarginine into N(2)-succinylornithine, ammonia and CO(2). The chain is N-succinylarginine dihydrolase from Yersinia enterocolitica serotype O:8 / biotype 1B (strain NCTC 13174 / 8081).